The chain runs to 294 residues: C-type lectin domain family 4 member G (294 aa).

Topologically, residues 1–30 (MNTGEYNKLGSAIEEVSRGQLGRWECYKQR) are cytoplasmic. Residues 31-51 (LFFLVLALLVATVLWALILST) form a helical; Signal-anchor for type II membrane protein membrane-spanning segment. Topologically, residues 52–294 (LLSSASSKLR…WICEKRSSCY (243 aa)) are extracellular. Residue asparagine 73 is glycosylated (N-linked (GlcNAc...) asparagine). Residues 100–151 (AQLQTTLAEFKDIQAKLMEQESILKELQERVTQDLAKASRDRENIRSELFQA) adopt a coiled-coil conformation. N-linked (GlcNAc...) asparagine glycosylation is found at asparagine 159, asparagine 246, and asparagine 256. One can recognise a C-type lectin domain in the interval 172 to 287 (FQGSCYYFSE…CTNERDGWIC (116 aa)). Cysteines 264 and 278 form a disulfide.

The protein resides in the cell membrane. Its function is as follows. Binds mannose, N-acetylglucosamine (GlcNAc) and fucose, but not galactose, in a Ca(2+)-dependent manner. This chain is C-type lectin domain family 4 member G (Clec4g), found in Mus musculus (Mouse).